The primary structure comprises 250 residues: Hydroxyacylglutathione hydrolase (250 aa).

Zn(2+) is bound by residues H53, H55, D57, H58, H110, D127, and H165.

The protein belongs to the metallo-beta-lactamase superfamily. Glyoxalase II family. In terms of assembly, monomer. Requires Zn(2+) as cofactor.

It catalyses the reaction an S-(2-hydroxyacyl)glutathione + H2O = a 2-hydroxy carboxylate + glutathione + H(+). The protein operates within secondary metabolite metabolism; methylglyoxal degradation; (R)-lactate from methylglyoxal: step 2/2. Functionally, thiolesterase that catalyzes the hydrolysis of S-D-lactoyl-glutathione to form glutathione and D-lactic acid. The chain is Hydroxyacylglutathione hydrolase from Buchnera aphidicola subsp. Schizaphis graminum (strain Sg).